We begin with the raw amino-acid sequence, 350 residues long: Beta-hexosaminidase (350 aa).

Substrate contacts are provided by residues D73, R81, R148, and 178–179 (KH). Catalysis depends on H191, which acts as the Proton donor/acceptor. D262 (nucleophile) is an active-site residue.

This sequence belongs to the glycosyl hydrolase 3 family. NagZ subfamily.

It is found in the cytoplasm. It catalyses the reaction Hydrolysis of terminal non-reducing N-acetyl-D-hexosamine residues in N-acetyl-beta-D-hexosaminides.. The protein operates within cell wall biogenesis; peptidoglycan recycling. Plays a role in peptidoglycan recycling by cleaving the terminal beta-1,4-linked N-acetylglucosamine (GlcNAc) from peptide-linked peptidoglycan fragments, giving rise to free GlcNAc, anhydro-N-acetylmuramic acid and anhydro-N-acetylmuramic acid-linked peptides. The polypeptide is Beta-hexosaminidase (Bordetella avium (strain 197N)).